We begin with the raw amino-acid sequence, 458 residues long: MGKEKTHVNVVVIGHVDSGKSTTTGHLIYKCGGIDKRTIEEFEKEAAELGKGSFKYAWVLDKLKAERERGITIDIALWKFETPKYNVTVIDAPGHRDFIKNMITGTSQADCAILIIAGGTGEFEAGISKDGQTREHALLAFTLGFRQLIVAINKMDTTKWSQDRYNEIVKEVSGFIKKIGFNPKSVPFVPISGWHGDNMLDESTNMPWFKGWNKETKAGSKTGKTLLEAIDAIEPPVRPSDKPLRLPLQDVYKIGGIGTVPVGRVETGTIKAGMVVNFAPAAVTTEVKSVEMHHETLTEGLPGDNVGFNVKNVSVKDIRRGNVCSDSKNDPAKESASFTAQVIILNHPGQISAGYAPVLDCHTAHIACKFSELIEKIDRRSGKKMEDSPKFVKSGDSAIVKMVPSKPMCVEAYTDYPPLGRFAVRDMRQTVAVGVIKAVEKVDKAGKVTKAAAKASKK.

Gly2 is modified (n,N,N-trimethylglycine). Residue Lys3 is modified to N6,N6-dimethyllysine; alternate. Residue Lys3 is modified to N6-methyllysine; alternate. In terms of domain architecture, tr-type G spans 5-240; that stretch reads KTHVNVVVIG…DAIEPPVRPS (236 aa). Positions 14–21 are G1; the sequence is GHVDSGKS. 14–21 contributes to the GTP binding site; that stretch reads GHVDSGKS. At Lys30 the chain carries N6-methyllysine. Positions 70–74 are G2; that stretch reads GITID. Lys79 carries the N6,N6,N6-trimethyllysine modification. A G3 region spans residues 91-94; that stretch reads DAPG. Residues 91-95 and 153-156 each bind GTP; these read DAPGH and NKMD. Residues 153 to 156 form a G4 region; that stretch reads NKMD. Positions 192-194 are G5; that stretch reads SGW. An N6,N6-dimethyllysine; alternate modification is found at Lys316. Lys316 carries the N6-methyllysine; alternate modification. Lys390 bears the N6-methyllysine mark.

The protein belongs to the TRAFAC class translation factor GTPase superfamily. Classic translation factor GTPase family. EF-Tu/EF-1A subfamily.

Its subcellular location is the cytoplasm. This protein promotes the GTP-dependent binding of aminoacyl-tRNA to the A-site of ribosomes during protein biosynthesis. This chain is Elongation factor 1-alpha (TEF-1), found in Mucor circinelloides f. lusitanicus (Mucor racemosus var. lusitanicus).